The chain runs to 69 residues: Cytochrome c oxidase subunit 8A, mitochondrial (69 aa).

A mitochondrion-targeting transit peptide spans 1-25 (MSVLTSLLLRGLTGSARRLPVPRAK). The SIFI-degron signature appears at 2–19 (SVLTSLLLRGLTGSARRL). Over 26–36 (VHSMPPEEELG) the chain is Mitochondrial matrix. Residues 37–60 (TLEKAIALTSCFVSLFLPAGWILS) traverse the membrane as a helical segment. The Mitochondrial intermembrane portion of the chain corresponds to 61 to 69 (HLEDYKRPE).

This sequence belongs to the cytochrome c oxidase VIII family. As to quaternary structure, component of the cytochrome c oxidase (complex IV, CIV), a multisubunit enzyme composed of 14 subunits. The complex is composed of a catalytic core of 3 subunits MT-CO1, MT-CO2 and MT-CO3, encoded in the mitochondrial DNA, and 11 supernumerary subunits COX4I, COX5A, COX5B, COX6A, COX6B, COX6C, COX7A, COX7B, COX7C, COX8 and NDUFA4, which are encoded in the nuclear genome. The complex exists as a monomer or a dimer and forms supercomplexes (SCs) in the inner mitochondrial membrane with NADH-ubiquinone oxidoreductase (complex I, CI) and ubiquinol-cytochrome c oxidoreductase (cytochrome b-c1 complex, complex III, CIII), resulting in different assemblies (supercomplex SCI(1)III(2)IV(1) and megacomplex MCI(2)III(2)IV(2)). In response to mitochondrial stress, the precursor protein is ubiquitinated by the SIFI complex in the cytoplasm before mitochondrial import, leading to its degradation. Within the SIFI complex, UBR4 initiates ubiquitin chain that are further elongated or branched by KCMF1.

Its subcellular location is the mitochondrion inner membrane. Its pathway is energy metabolism; oxidative phosphorylation. Its function is as follows. Component of the cytochrome c oxidase, the last enzyme in the mitochondrial electron transport chain which drives oxidative phosphorylation. The respiratory chain contains 3 multisubunit complexes succinate dehydrogenase (complex II, CII), ubiquinol-cytochrome c oxidoreductase (cytochrome b-c1 complex, complex III, CIII) and cytochrome c oxidase (complex IV, CIV), that cooperate to transfer electrons derived from NADH and succinate to molecular oxygen, creating an electrochemical gradient over the inner membrane that drives transmembrane transport and the ATP synthase. Cytochrome c oxidase is the component of the respiratory chain that catalyzes the reduction of oxygen to water. Electrons originating from reduced cytochrome c in the intermembrane space (IMS) are transferred via the dinuclear copper A center (CU(A)) of subunit 2 and heme A of subunit 1 to the active site in subunit 1, a binuclear center (BNC) formed by heme A3 and copper B (CU(B)). The BNC reduces molecular oxygen to 2 water molecules using 4 electrons from cytochrome c in the IMS and 4 protons from the mitochondrial matrix. This chain is Cytochrome c oxidase subunit 8A, mitochondrial (COX8A), found in Papio anubis (Olive baboon).